The following is a 95-amino-acid chain: Small ribosomal subunit protein uS17 (95 aa).

Belongs to the universal ribosomal protein uS17 family. As to quaternary structure, part of the 30S ribosomal subunit.

In terms of biological role, one of the primary rRNA binding proteins, it binds specifically to the 5'-end of 16S ribosomal RNA. In Psychrobacter sp. (strain PRwf-1), this protein is Small ribosomal subunit protein uS17.